Here is a 251-residue protein sequence, read N- to C-terminus: MATVTTHASASIFRPCTSKPRFLTGSSGRLNRDLSFTSIGSSAKTSSFKVEAKKGEWLPGLASPDYLTGSLAGDNGFDPLGLAEDPENLKWFVQAELVNGRWAMLGVAGMLLPEVFTKIGIINVPEWYDAGKEQYFASSSTLFVIEFILFHYVEIRRWQDIKNPGSVNQDPIFKQYSLPKGEVGYPGGIFNPLNFAPTQEAKEKELANGRLAMLAFLGFVVQHNVTGKGPFENLLQHLSDPWHNTIVQTFN.

A Phosphoserine modification is found at Ser35. Trp57 lines the chlorophyll b pocket. The chlorophyll a site is built by Phe77 and Glu96. A chlorophyll b-binding site is contributed by Arg101. Helical transmembrane passes span 102–122 and 135–155; these read WAML…IGII and YFAS…YVEI. The chlorophyll b site is built by Ser138, Val144, Glu154, and Arg157. 6 residues coordinate chlorophyll a: Lys204, Glu205, Asn208, Arg210, Gln222, and His237.

The protein belongs to the light-harvesting chlorophyll a/b-binding (LHC) protein family. In terms of assembly, the LHC complex consists of chlorophyll a-b binding proteins. Red-emitting heterodimer with LHCA1. The cofactor is Binds at least 14 chlorophylls (8 Chl-a and 6 Chl-b) and carotenoids such as lutein and neoxanthin.. Post-translationally, photoregulated by reversible phosphorylation of its threonine residues.

The protein localises to the plastid. The protein resides in the chloroplast thylakoid membrane. The light-harvesting complex (LHC) functions as a light receptor, it captures and delivers excitation energy to photosystems with which it is closely associated. This chain is Chlorophyll a-b binding protein 4, chloroplastic, found in Arabidopsis thaliana (Mouse-ear cress).